The primary structure comprises 451 residues: UDP-glycosyltransferase 76E11 (451 aa).

UDP-alpha-D-glucose contacts are provided by residues Ser273, Ala332–Gln334, His349–Glu357, and Ser371–Gln374.

Belongs to the UDP-glycosyltransferase family.

In terms of biological role, possesses low quercetin 3-O-glucosyltransferase and 7-O-glucosyltransferase activities in vitro. This chain is UDP-glycosyltransferase 76E11 (UGT76E11), found in Arabidopsis thaliana (Mouse-ear cress).